Reading from the N-terminus, the 409-residue chain is Glycosyltransferase GtfE (409 aa).

The protein belongs to the glycosyltransferase 28 family.

It participates in antibiotic biosynthesis; vancomycin biosynthesis. Its function is as follows. D-glucosyltransferase that acts on the aglycone core, transferring D-glucose to the phenolic hydroxyl of OH-Phegly(4) to form a devancoaminyl-vancomycin (DVV) intermediate in the biosynthesis of glycopeptide antibiotic vancomycin. Also able to glycosylate A47934, an antibiotic with a teicoplanin-like heptapeptide, but lacking sugar residues. In Amycolatopsis orientalis (Nocardia orientalis), this protein is Glycosyltransferase GtfE (gtfE).